The sequence spans 296 residues: Glycine--tRNA ligase alpha subunit (296 aa).

The protein belongs to the class-II aminoacyl-tRNA synthetase family. Tetramer of two alpha and two beta subunits.

It is found in the cytoplasm. The catalysed reaction is tRNA(Gly) + glycine + ATP = glycyl-tRNA(Gly) + AMP + diphosphate. This chain is Glycine--tRNA ligase alpha subunit, found in Listeria welshimeri serovar 6b (strain ATCC 35897 / DSM 20650 / CCUG 15529 / CIP 8149 / NCTC 11857 / SLCC 5334 / V8).